The following is a 76-amino-acid chain: DNA-directed RNA polymerase subunit epsilon (76 aa).

The protein belongs to the RNA polymerase subunit epsilon family. RNAP is composed of a core of 2 alpha, a beta and a beta' subunit. The core is associated with a delta subunit, and at least one of epsilon or omega. When a sigma factor is associated with the core the holoenzyme is formed, which can initiate transcription.

It carries out the reaction RNA(n) + a ribonucleoside 5'-triphosphate = RNA(n+1) + diphosphate. In terms of biological role, a non-essential component of RNA polymerase (RNAP). The sequence is that of DNA-directed RNA polymerase subunit epsilon from Streptococcus pyogenes serotype M1.